Here is a 382-residue protein sequence, read N- to C-terminus: Lipid-A-disaccharide synthase (382 aa).

It belongs to the LpxB family.

It catalyses the reaction 2-N,3-O-bis[(3R)-3-hydroxytetradecanoyl]-alpha-D-glucosaminyl 1-phosphate + UDP-2-N,3-O-bis[(3R)-3-hydroxytetradecanoyl]-alpha-D-glucosamine = lipid A disaccharide (E. coli) + UDP + H(+). The enzyme catalyses a lipid X + a UDP-2-N,3-O-bis[(3R)-3-hydroxyacyl]-alpha-D-glucosamine = a lipid A disaccharide + UDP + H(+). Its pathway is glycolipid biosynthesis; lipid IV(A) biosynthesis; lipid IV(A) from (3R)-3-hydroxytetradecanoyl-[acyl-carrier-protein] and UDP-N-acetyl-alpha-D-glucosamine: step 5/6. In terms of biological role, condensation of UDP-2,3-diacylglucosamine and 2,3-diacylglucosamine-1-phosphate to form lipid A disaccharide, a precursor of lipid A, a phosphorylated glycolipid that anchors the lipopolysaccharide to the outer membrane of the cell. The sequence is that of Lipid-A-disaccharide synthase from Sodalis glossinidius (strain morsitans).